Consider the following 279-residue polypeptide: Diaminopimelate epimerase (279 aa).

Residues Asn-13 and Asn-66 each coordinate substrate. Cys-75 functions as the Proton donor in the catalytic mechanism. Substrate-binding positions include 76–77, Asn-164, Asn-197, and 215–216; these read GN and ER. Cys-224 acts as the Proton acceptor in catalysis. 225–226 lines the substrate pocket; the sequence is GT.

It belongs to the diaminopimelate epimerase family. In terms of assembly, homodimer.

The protein resides in the cytoplasm. The enzyme catalyses (2S,6S)-2,6-diaminopimelate = meso-2,6-diaminopimelate. It participates in amino-acid biosynthesis; L-lysine biosynthesis via DAP pathway; DL-2,6-diaminopimelate from LL-2,6-diaminopimelate: step 1/1. Functionally, catalyzes the stereoinversion of LL-2,6-diaminopimelate (L,L-DAP) to meso-diaminopimelate (meso-DAP), a precursor of L-lysine and an essential component of the bacterial peptidoglycan. This chain is Diaminopimelate epimerase, found in Brachyspira hyodysenteriae (strain ATCC 49526 / WA1).